A 555-amino-acid chain; its full sequence is uncharacterized protein (555 aa).

ABC transporter domains follow at residues 4–244 (VKVK…PPYK) and 255–547 (IQVR…ARFM). ATP-binding positions include 36–43 (GKSGAGKS) and 292–299 (GPSGVGKT).

The protein belongs to the ABC transporter superfamily.

This is an uncharacterized protein from Methanocaldococcus jannaschii (strain ATCC 43067 / DSM 2661 / JAL-1 / JCM 10045 / NBRC 100440) (Methanococcus jannaschii).